A 546-amino-acid chain; its full sequence is Putative serine/threonine-protein kinase L268 (546 aa).

The region spanning 1-112 is the Cyclin N-terminal domain; the sequence is MVCFSKYSGI…ILQTLDFHLV (112 aa). The 285-residue stretch at 260–544 folds into the Protein kinase domain; that stretch reads ITVVKNLGEG…QTLEEFNKFN (285 aa). Residues 266–274 and Lys287 contribute to the ATP site; that span reads LGEGTYGTV. Residue Asp389 is the Proton acceptor of the active site.

This sequence belongs to the protein kinase superfamily. Ser/Thr protein kinase family.

The enzyme catalyses L-seryl-[protein] + ATP = O-phospho-L-seryl-[protein] + ADP + H(+). It carries out the reaction L-threonyl-[protein] + ATP = O-phospho-L-threonyl-[protein] + ADP + H(+). The polypeptide is Putative serine/threonine-protein kinase L268 (Acanthamoeba polyphaga mimivirus (APMV)).